The following is a 405-amino-acid chain: DNA polymerase IV 1 (405 aa).

Positions 23 to 203 (IAHIDCDAFY…RPVTTIWGVG (181 aa)) constitute a UmuC domain. Mg(2+) is bound by residues aspartate 27 and aspartate 120. The active site involves glutamate 121.

It belongs to the DNA polymerase type-Y family. Monomer. The cofactor is Mg(2+).

Its subcellular location is the cytoplasm. It carries out the reaction DNA(n) + a 2'-deoxyribonucleoside 5'-triphosphate = DNA(n+1) + diphosphate. In terms of biological role, poorly processive, error-prone DNA polymerase involved in untargeted mutagenesis. Copies undamaged DNA at stalled replication forks, which arise in vivo from mismatched or misaligned primer ends. These misaligned primers can be extended by PolIV. Exhibits no 3'-5' exonuclease (proofreading) activity. May be involved in translesional synthesis, in conjunction with the beta clamp from PolIII. The polypeptide is DNA polymerase IV 1 (dinB1) (Agrobacterium fabrum (strain C58 / ATCC 33970) (Agrobacterium tumefaciens (strain C58))).